The primary structure comprises 42 residues: Photosystem II reaction center protein J (42 aa).

A helical membrane pass occupies residues 10–30 (IPLWLIGTVVGSLAIGLLAIF).

The protein belongs to the PsbJ family. PSII is composed of 1 copy each of membrane proteins PsbA, PsbB, PsbC, PsbD, PsbE, PsbF, PsbH, PsbI, PsbJ, PsbK, PsbL, PsbM, PsbT, PsbX, PsbY, PsbZ, Psb30/Ycf12, at least 3 peripheral proteins of the oxygen-evolving complex and a large number of cofactors. It forms dimeric complexes.

The protein resides in the plastid. The protein localises to the chloroplast thylakoid membrane. Functionally, one of the components of the core complex of photosystem II (PSII). PSII is a light-driven water:plastoquinone oxidoreductase that uses light energy to abstract electrons from H(2)O, generating O(2) and a proton gradient subsequently used for ATP formation. It consists of a core antenna complex that captures photons, and an electron transfer chain that converts photonic excitation into a charge separation. The chain is Photosystem II reaction center protein J from Stigeoclonium helveticum (Green alga).